Reading from the N-terminus, the 427-residue chain is Adenylosuccinate synthetase (427 aa).

GTP is bound by residues 12-18 (GDEGKGK) and 40-42 (GHT). The active-site Proton acceptor is D13. Residues D13 and G40 each contribute to the Mg(2+) site. IMP-binding positions include 13–16 (DEGK), 38–41 (NAGH), T128, R142, Q223, T238, and R302. H41 (proton donor) is an active-site residue. 298-304 (TTTGRPR) is a binding site for substrate. GTP is bound by residues R304, 330-332 (SID), and 412-414 (SVG).

Belongs to the adenylosuccinate synthetase family. In terms of assembly, homodimer. It depends on Mg(2+) as a cofactor.

The protein resides in the cytoplasm. It carries out the reaction IMP + L-aspartate + GTP = N(6)-(1,2-dicarboxyethyl)-AMP + GDP + phosphate + 2 H(+). The protein operates within purine metabolism; AMP biosynthesis via de novo pathway; AMP from IMP: step 1/2. Its function is as follows. Plays an important role in the de novo pathway of purine nucleotide biosynthesis. Catalyzes the first committed step in the biosynthesis of AMP from IMP. The polypeptide is Adenylosuccinate synthetase (Staphylococcus aureus (strain MW2)).